The primary structure comprises 348 residues: 3-methyl-2-oxobutanoate dehydrogenase subunit beta (348 aa).

Thiamine diphosphate contacts are provided by residues E51, 80 to 82 (LAE), Q104, and 108 to 111 (FSYP). Substrate contacts are provided by residues 105–108 (FDGF) and H151. The active-site Proton acceptor is H151.

In terms of assembly, heteromer of E1 alpha (BkdA) and beta (BkdB) subunits. Part of the BCKADH complex, consisting of multiple copies of BkdA/BkdB (E1), BkdC (E2) and Lpd (E3). Requires thiamine diphosphate as cofactor.

The catalysed reaction is N(6)-[(R)-lipoyl]-L-lysyl-[protein] + 3-methyl-2-oxobutanoate + H(+) = N(6)-[(R)-S(8)-2-methylpropanoyldihydrolipoyl]-L-lysyl-[protein] + CO2. In terms of biological role, component of the branched-chain alpha-ketoacid dehydrogenase (BCKADH) complex, that catalyzes the overall conversion of branched-chain alpha-ketoacids to acyl-CoA and CO(2). In Mycobacterium tuberculosis (strain CDC 1551 / Oshkosh), this protein is 3-methyl-2-oxobutanoate dehydrogenase subunit beta (bkdB).